A 771-amino-acid polypeptide reads, in one-letter code: Transducin-like enhancer protein 3-B (771 aa).

The interval 1-141 (MYPQGRHPAP…PLTQQQLQAQ (141 aa)) is q domain. Over residues 137–148 (QLQAQHLSHAAH) the composition is skewed to low complexity. Disordered regions lie at residues 137–174 (QLQA…GSGS) and 196–360 (HHDL…MEAL). The GP domain stretch occupies residues 142–209 (HLSHAAHGPP…EHRERESSTN (68 aa)). Residues 196–206 (HHDLEHRERES) are compositionally biased toward basic and acidic residues. The span at 207–217 (STNNSVSPSDS) shows a compositional bias: low complexity. Residues 210 to 278 (NSVSPSDSLR…TPRVSPSHSP (69 aa)) are ccN domain. Composition is skewed to basic and acidic residues over residues 219 to 257 (RASE…KSDD) and 282 to 293 (GLDKARALKKDA). The short motif at 235–238 (KKRR) is the Nuclear localization signal element. The segment at 279–451 (PENGLDKARA…GGKPAYSFHV (173 aa)) is SP domain. The segment covering 294-309 (PNSPASVASSGSTPSS) has biased composition (low complexity). A phosphoserine mark is found at Ser-296 and Ser-299. Residues 310 to 319 (KAKDHPHNDK) are compositionally biased toward basic and acidic residues. Positions 320 to 332 (SSTPGLKSNTPTP) are enriched in polar residues. 7 WD repeats span residues 483–521 (SHGE…SKSP), 529–568 (NRDN…PRIK), 573–612 (SSAP…LVRQ), 615–654 (GHTD…QLQQ), 656–695 (DFTS…KYQL), 697–736 (LHES…SIFQ), and 738–771 (KESS…EVIY).

Belongs to the WD repeat Groucho/TLE family. In terms of tissue distribution, at gastrulation, expression is absent within the axial mesoderm. After gastrulation is complete, expressed in the presomitic mesoderm, but expression in the tailbud doesn't begin until the six to seven somite stage, after which it becomes abundant. Expression is abundant throughout somitogenesis within the posterior half of the somites, but is absent from older somites. Also expressed in a dynamic manner within the neural plate.

Its subcellular location is the nucleus. In terms of biological role, transcriptional corepressor that binds to a number of transcription factors. Inhibits the transcriptional activation mediated by CTNNB1 and TCF family members in Wnt signaling. The effects of full-length TLE family members may be modulated by association with dominant-negative AES. In Danio rerio (Zebrafish), this protein is Transducin-like enhancer protein 3-B.